The following is a 334-amino-acid chain: Ketol-acid reductoisomerase (NADP(+)) (334 aa).

The 181-residue stretch at 1-181 (MTTVYYDQDV…GATRAGVIET (181 aa)) folds into the KARI N-terminal Rossmann domain. NADP(+)-binding positions include 25–28 (YGSQ), Arg48, Ser52, and 82–85 (DEIQ). His107 is an active-site residue. NADP(+) is bound at residue Gly133. The region spanning 182 to 327 (TFKEETETDL…RELREMMPFI (146 aa)) is the KARI C-terminal knotted domain. Mg(2+) is bound by residues Asp190, Glu194, Glu226, and Glu230. Ser251 provides a ligand contact to substrate.

This sequence belongs to the ketol-acid reductoisomerase family. Mg(2+) serves as cofactor.

It catalyses the reaction (2R)-2,3-dihydroxy-3-methylbutanoate + NADP(+) = (2S)-2-acetolactate + NADPH + H(+). It carries out the reaction (2R,3R)-2,3-dihydroxy-3-methylpentanoate + NADP(+) = (S)-2-ethyl-2-hydroxy-3-oxobutanoate + NADPH + H(+). The protein operates within amino-acid biosynthesis; L-isoleucine biosynthesis; L-isoleucine from 2-oxobutanoate: step 2/4. It functions in the pathway amino-acid biosynthesis; L-valine biosynthesis; L-valine from pyruvate: step 2/4. Its function is as follows. Involved in the biosynthesis of branched-chain amino acids (BCAA). Catalyzes an alkyl-migration followed by a ketol-acid reduction of (S)-2-acetolactate (S2AL) to yield (R)-2,3-dihydroxy-isovalerate. In the isomerase reaction, S2AL is rearranged via a Mg-dependent methyl migration to produce 3-hydroxy-3-methyl-2-ketobutyrate (HMKB). In the reductase reaction, this 2-ketoacid undergoes a metal-dependent reduction by NADPH to yield (R)-2,3-dihydroxy-isovalerate. This Staphylococcus aureus (strain USA300) protein is Ketol-acid reductoisomerase (NADP(+)).